The sequence spans 604 residues: Prostaglandin G/H synthase 2 (604 aa).

The signal sequence occupies residues 1–17; that stretch reads MLARALLLCAAVALSHA. Positions 18–55 constitute an EGF-like domain; sequence ANPCCSNPCQNRGVCMTMGFDQYKCDCTRTGFYGENCS. Disulfide bonds link C21/C32, C22/C145, C26/C42, and C44/C54. A glycan (N-linked (GlcNAc...) asparagine) is linked at N53. Residue R106 coordinates substrate. N130 carries N-linked (GlcNAc...) asparagine glycosylation. The active-site Proton acceptor is the H193. Y341 contacts substrate. Y371 functions as the For cyclooxygenase activity in the catalytic mechanism. H374 serves as a coordination point for heme b. A glycan (N-linked (GlcNAc...) asparagine) is linked at N396. Residue C526 is modified to S-nitrosocysteine. C555 and C561 are joined by a disulfide. An O-acetylserine modification is found at S565. N-linked (GlcNAc...) asparagine glycosylation occurs at N580.

This sequence belongs to the prostaglandin G/H synthase family. As to quaternary structure, homodimer. Heme b serves as cofactor. S-nitrosylation by NOS2 (iNOS) activates enzyme activity. S-nitrosylation may take place on different Cys residues in addition to Cys-526. In terms of processing, acetylated at Ser-565 by SPHK1. During neuroinflammation, acetylation by SPHK1 promotes neuronal secretion of specialized preresolving mediators (SPMs), especially 15-R-lipoxin A4, which results in an increase of phagocytic microglia. Highest expression in kidney and urinary bladder.

Its subcellular location is the microsome membrane. The protein resides in the endoplasmic reticulum membrane. It localises to the nucleus inner membrane. The protein localises to the nucleus outer membrane. It catalyses the reaction (5Z,8Z,11Z,14Z)-eicosatetraenoate + AH2 + 2 O2 = prostaglandin H2 + A + H2O. The catalysed reaction is (5Z,8Z,11Z,14Z)-eicosatetraenoate + 2 O2 = prostaglandin G2. The enzyme catalyses prostaglandin G2 + AH2 = prostaglandin H2 + A + H2O. It carries out the reaction (5Z,8Z,11Z,14Z,17Z)-eicosapentaenoate + 2 O2 = prostaglandin G3. It catalyses the reaction prostaglandin G3 + AH2 = prostaglandin H3 + A + H2O. The catalysed reaction is (8Z,11Z,14Z)-eicosatrienoate + 2 O2 = prostaglandin G1. The enzyme catalyses prostaglandin G1 + AH2 = prostaglandin H1 + A + H2O. It carries out the reaction 2-(5Z,8Z,11Z,14Z)-eicosatetraenoyl-sn-glycero-3-phosphoethanolamine + 2 O2 = 2-(prostaglandin G2)-sn-glycero-3-phosphoethanolamine. It catalyses the reaction 2-(prostaglandin G2)-sn-glycero-3-phosphoethanolamine + AH2 = 2-(prostaglandin H2)-sn-glycero-3-phosphoethanolamine + A + H2O. The catalysed reaction is 2-(5Z,8Z,11Z,14Z)-eicosatetraenoyl-sn-glycero-3-phosphocholine + 2 O2 = 2-(prostaglandin G2)-sn-glycero-3-phosphocholine. The enzyme catalyses 2-(prostaglandin G2)-sn-glycero-3-phosphocholine + AH2 = 2-(prostaglandin H2)-sn-glycero-3-phosphocholine + A + H2O. It carries out the reaction (15S)-hydroperoxy-(5Z,8Z,11Z,13E)-eicosatetraenoate + AH2 = (15S)-hydroxy-(5Z,8Z,11Z,13E)-eicosatetraenoate + A + H2O. It catalyses the reaction 2-(5Z,8Z,11Z,14Z)-eicosatetraenoyl-sn-glycero-3-phosphocholine + AH2 + O2 = 2-[(15S)-hydroxy-(5Z,8Z,11Z,13E)-eicosatetraenoyl]-sn-glycero-3-phosphocholine + A + H2O. The catalysed reaction is 2-(5Z,8Z,11Z,14Z)-eicosatetraenoyl-sn-glycero-3-phosphocholine + AH2 + O2 = 2-[(15R)-hydroxy-(5Z,8Z,11Z,13E)-eicosatetraenoyl]-sn-glycero-3-phosphocholine + A + H2O. The enzyme catalyses 2-(5Z,8Z,11Z,14Z)-eicosatetraenoyl-sn-glycero-3-phosphocholine + AH2 + O2 = 2-[(11R)-hydroxy-(5Z,8Z,12E,14Z)-eicosatetraenoyl]-sn-glycero-3-phosphocholine + A + H2O. It carries out the reaction (9Z,12Z)-octadecadienoate + AH2 + O2 = 9-hydroxy-(10E,12Z)-octadecadienoate + A + H2O. It catalyses the reaction (9Z,12Z)-octadecadienoate + AH2 + O2 = 13-hydroxy-(9Z,11E)-octadecadienoate + A + H2O. The catalysed reaction is (5Z,8Z,11Z,14Z)-eicosatetraenoate + AH2 + O2 = (15R)-hydroxy-(5Z,8Z,11Z,13E)-eicosatetraenoate + A + H2O. The enzyme catalyses (5Z,8Z,11Z,14Z)-eicosatetraenoate + AH2 + O2 = (11R)-hydroxy-(5Z,8Z,12E,14Z)-eicosatetraenoate + A + H2O. It carries out the reaction (5Z,8Z,11Z,14Z,17Z)-eicosapentaenoate + AH2 + O2 = (11R)-hydroxy-(5Z,8Z,12E,14Z,17Z)-eicosapentaenoate + A + H2O. It catalyses the reaction (5Z,8Z,11Z,14Z,17Z)-eicosapentaenoate + AH2 + O2 = (18S)-hydroxy-(5Z,8Z,11Z,14Z,16E)-eicosapentaenoate + A + H2O. The catalysed reaction is (5Z,8Z,11Z,14Z,17Z)-eicosapentaenoate + AH2 + O2 = (18R)-hydroxy-(5Z,8Z,11Z,14Z,16E)-eicosapentaenoate + A + H2O. The enzyme catalyses (5Z,8Z,11Z,14Z,17Z)-eicosapentaenoate + AH2 + O2 = (15R)-hydroxy-(5Z,8Z,11Z,13E,17Z)-eicosapentaenoate + A + H2O. It carries out the reaction (5Z,8Z,11Z,14Z,17Z)-eicosapentaenoate + AH2 + O2 = (15S)-hydroxy-(5Z,8Z,11Z,13E,17Z)-eicosapentaenoate + A + H2O. It catalyses the reaction (7Z,10Z,13Z,16Z,19Z)-docosapentaenoate + AH2 + O2 = 13R-hydroxy-(7Z,10Z,14E,16Z,19Z)-docosapentaenoate + A + H2O. The catalysed reaction is (4Z,7Z,10Z,13Z,16Z,19Z)-docosahexaenoate + AH2 + O2 = 13-hydroxy-(4Z,7Z,10Z,14E,16Z,19Z)-docosahexaenoate + A + H2O. The enzyme catalyses (5S)-hydroxy-(6E,8Z,11Z,14Z)-eicosatetraenoate + AH2 + O2 = (5S,15R)-dihydroxy-(6E,8Z,11Z,13E)-eicosatetraenoate + A + H2O. It carries out the reaction (4Z,7Z,10Z,13Z,16Z,19Z)-docosahexaenoate + AH2 + O2 = 17R-hydroxy-(4Z,7Z,10Z,13Z,15E,19Z)-docosahexaenoate + A + H2O. It catalyses the reaction (5S)-hydroxy-(6E,8Z,11Z,14Z)-eicosatetraenoate + AH2 + O2 = (5S,15S)-dihydroxy-(6E,8Z,11Z,13E)-eicosatetraenoate + A + H2O. The catalysed reaction is (5S)-hydroxy-(6E,8Z,11Z,14Z)-eicosatetraenoate + AH2 + O2 = (5S,11R)-dihydroxy-(6E,8Z,12E,14Z)-eicosatetraenoate + A + H2O. The enzyme catalyses 2-(5Z,8Z,11Z,14Z-eicosatetraenoyl)-glycerol + 2 O2 = 2-glyceryl-prostaglandin G2. It carries out the reaction 2-glyceryl-prostaglandin G2 + AH2 = 2-glyceryl-prostaglandin H2 + A + H2O. It catalyses the reaction (5Z,8Z,11Z,14Z)-eicosatetraenoate + O2 = (15R)-hydroperoxy-(5Z,8Z,11Z,13E)-eicosatetraenoate. The catalysed reaction is (5Z,8Z,11Z,14Z)-eicosatetraenoate + O2 = 11R-hydroperoxy-(5Z,8Z,12E,14Z)-eicosatetraenoate. The enzyme catalyses (9Z,12Z)-octadecadienoate + AH2 + O2 = (9R)-hydroxy-(10E,12Z)-octadecadienoate + A + H2O. It carries out the reaction (9Z,12Z)-octadecadienoate + AH2 + O2 = (9S)-hydroxy-(10E,12Z)-octadecadienoate + A + H2O. It catalyses the reaction (9Z,12Z)-octadecadienoate + AH2 + O2 = (13S)-hydroxy-(9Z,11E)-octadecadienoate + A + H2O. The catalysed reaction is (9Z,12Z)-octadecadienoate + AH2 + O2 = (13R)-hydroxy-(9Z,11E)-octadecadienoate + A + H2O. Its pathway is lipid metabolism; prostaglandin biosynthesis. In terms of biological role, dual cyclooxygenase and peroxidase in the biosynthesis pathway of prostanoids, a class of C20 oxylipins mainly derived from arachidonate ((5Z,8Z,11Z,14Z)-eicosatetraenoate, AA, C20:4(n-6)), with a particular role in the inflammatory response. The cyclooxygenase activity oxygenates AA to the hydroperoxy endoperoxide prostaglandin G2 (PGG2), and the peroxidase activity reduces PGG2 to the hydroxy endoperoxide prostaglandin H2 (PGH2), the precursor of all 2-series prostaglandins and thromboxanes. This complex transformation is initiated by abstraction of hydrogen at carbon 13 (with S-stereochemistry), followed by insertion of molecular O2 to form the endoperoxide bridge between carbon 9 and 11 that defines prostaglandins. The insertion of a second molecule of O2 (bis-oxygenase activity) yields a hydroperoxy group in PGG2 that is then reduced to PGH2 by two electrons. Similarly catalyzes successive cyclooxygenation and peroxidation of dihomo-gamma-linoleate (DGLA, C20:3(n-6)) and eicosapentaenoate (EPA, C20:5(n-3)) to corresponding PGH1 and PGH3, the precursors of 1- and 3-series prostaglandins. In an alternative pathway of prostanoid biosynthesis, converts 2-arachidonoyl lysophopholipids to prostanoid lysophopholipids, which are then hydrolyzed by intracellular phospholipases to release free prostanoids. Metabolizes 2-arachidonoyl glycerol yielding the glyceryl ester of PGH2, a process that can contribute to pain response. Generates lipid mediators from n-3 and n-6 polyunsaturated fatty acids (PUFAs) via a lipoxygenase-type mechanism. Oxygenates PUFAs to hydroperoxy compounds and then reduces them to corresponding alcohols. Plays a role in the generation of resolution phase interaction products (resolvins) during both sterile and infectious inflammation. Metabolizes docosahexaenoate (DHA, C22:6(n-3)) to 17R-HDHA, a precursor of the D-series resolvins (RvDs). As a component of the biosynthetic pathway of E-series resolvins (RvEs), converts eicosapentaenoate (EPA, C20:5(n-3)) primarily to 18S-HEPE that is further metabolized by ALOX5 and LTA4H to generate 18S-RvE1 and 18S-RvE2. In vascular endothelial cells, converts docosapentaenoate (DPA, C22:5(n-3)) to 13R-HDPA, a precursor for 13-series resolvins (RvTs) shown to activate macrophage phagocytosis during bacterial infection. In activated leukocytes, contributes to oxygenation of hydroxyeicosatetraenoates (HETE) to diHETES (5,15-diHETE and 5,11-diHETE). Can also use linoleate (LA, (9Z,12Z)-octadecadienoate, C18:2(n-6)) as substrate and produce hydroxyoctadecadienoates (HODEs) in a regio- and stereospecific manner,being (9R)-HODE ((9R)-hydroxy-(10E,12Z)-octadecadienoate) and (13S)-HODE ((13S)-hydroxy-(9Z,11E)-octadecadienoate) its major products. During neuroinflammation, plays a role in neuronal secretion of specialized preresolving mediators (SPMs) 15R-lipoxin A4 that regulates phagocytic microglia. The polypeptide is Prostaglandin G/H synthase 2 (PTGS2) (Oryctolagus cuniculus (Rabbit)).